We begin with the raw amino-acid sequence, 502 residues long: Probable malate:quinone oxidoreductase (502 aa).

Belongs to the MQO family. Requires FAD as cofactor.

The catalysed reaction is (S)-malate + a quinone = a quinol + oxaloacetate. It participates in carbohydrate metabolism; tricarboxylic acid cycle; oxaloacetate from (S)-malate (quinone route): step 1/1. In Synechococcus sp. (strain CC9902), this protein is Probable malate:quinone oxidoreductase.